The chain runs to 226 residues: UPF0173 metal-dependent hydrolase Minf_0129 (226 aa).

This sequence belongs to the UPF0173 family.

This chain is UPF0173 metal-dependent hydrolase Minf_0129, found in Methylacidiphilum infernorum (isolate V4) (Methylokorus infernorum (strain V4)).